Reading from the N-terminus, the 360-residue chain is Photosystem II protein D1 (360 aa).

A run of 3 helical transmembrane segments spans residues 29-46 (YIGW…TATS), 118-133 (HFLL…EWEL), and 142-156 (WIFV…AASA). Residue His-118 participates in chlorophyll a binding. Residue Tyr-126 coordinates pheophytin a. Residues Asp-170 and Glu-189 each coordinate [CaMn4O5] cluster. Residues 197–218 (FHMAGVAGVFGGSLFSAMHGSL) traverse the membrane as a helical segment. His-198 contributes to the chlorophyll a binding site. A quinone contacts are provided by residues His-215 and 264–265 (SF). His-215 provides a ligand contact to Fe cation. His-272 contacts Fe cation. A helical membrane pass occupies residues 274 to 288 (FLALWPVVGIWLTAM). [CaMn4O5] cluster is bound by residues His-332, Glu-333, Asp-342, and Ala-344. Positions 345-360 (SGEVLPVALTAPAVNG) are excised as a propeptide.

This sequence belongs to the reaction center PufL/M/PsbA/D family. PSII is composed of 1 copy each of membrane proteins PsbA, PsbB, PsbC, PsbD, PsbE, PsbF, PsbH, PsbI, PsbJ, PsbK, PsbL, PsbM, PsbT, PsbX, PsbY, PsbZ, Psb30/Ycf12, at least 3 peripheral proteins of the oxygen-evolving complex and a large number of cofactors. It forms dimeric complexes. It depends on The D1/D2 heterodimer binds P680, chlorophylls that are the primary electron donor of PSII, and subsequent electron acceptors. It shares a non-heme iron and each subunit binds pheophytin, quinone, additional chlorophylls, carotenoids and lipids. D1 provides most of the ligands for the Mn4-Ca-O5 cluster of the oxygen-evolving complex (OEC). There is also a Cl(-1) ion associated with D1 and D2, which is required for oxygen evolution. The PSII complex binds additional chlorophylls, carotenoids and specific lipids. as a cofactor. Tyr-161 forms a radical intermediate that is referred to as redox-active TyrZ, YZ or Y-Z. In terms of processing, C-terminally processed by CTPA; processing is essential to allow assembly of the oxygen-evolving complex and thus photosynthetic growth.

The protein resides in the plastid. The protein localises to the chloroplast thylakoid membrane. The catalysed reaction is 2 a plastoquinone + 4 hnu + 2 H2O = 2 a plastoquinol + O2. Photosystem II (PSII) is a light-driven water:plastoquinone oxidoreductase that uses light energy to abstract electrons from H(2)O, generating O(2) and a proton gradient subsequently used for ATP formation. It consists of a core antenna complex that captures photons, and an electron transfer chain that converts photonic excitation into a charge separation. The D1/D2 (PsbA/PsbD) reaction center heterodimer binds P680, the primary electron donor of PSII as well as several subsequent electron acceptors. This Phaeodactylum tricornutum (strain CCAP 1055/1) protein is Photosystem II protein D1.